A 326-amino-acid chain; its full sequence is Interleukin-1-binding protein (326 aa).

The first 18 residues, 1–18 (MSIPPVIFLPIFFYSSFV), serve as a signal peptide directing secretion. Ig-like C2-type domains are found at residues 24 to 115 (PECI…LNLT), 122 to 208 (SNID…YDVT), and 221 to 322 (PPTM…KTVT). Cysteine 48 and cysteine 99 form a disulfide bridge. Asparagine 80, asparagine 103, and asparagine 113 each carry an N-linked (GlcNAc...) asparagine; by host glycan. Cysteine 143 and cysteine 194 are joined by a disulfide. Asparagine 237 carries N-linked (GlcNAc...) asparagine; by host glycosylation. Cysteines 242 and 309 form a disulfide.

This sequence belongs to the interleukin-1 receptor family. In terms of assembly, interacts with mouse Il1b.

It is found in the secreted. In terms of biological role, may reduce the host inflammatory response by interacting with inteleukin-1 beta (Il1b) and thus decreasing the association between IL1B and its cellular receptor. The chain is Interleukin-1-binding protein (OPG201) from Bos taurus (Bovine).